A 704-amino-acid polypeptide reads, in one-letter code: Elongation factor G 1 (704 aa).

One can recognise a tr-type G domain in the interval 8-291 (ERYRNIGISA…AVIDYLPSPA (284 aa)). GTP contacts are provided by residues 17–24 (AHIDAGKT), 88–92 (DTPGH), and 142–145 (NKMD).

It belongs to the TRAFAC class translation factor GTPase superfamily. Classic translation factor GTPase family. EF-G/EF-2 subfamily.

Its subcellular location is the cytoplasm. Functionally, catalyzes the GTP-dependent ribosomal translocation step during translation elongation. During this step, the ribosome changes from the pre-translocational (PRE) to the post-translocational (POST) state as the newly formed A-site-bound peptidyl-tRNA and P-site-bound deacylated tRNA move to the P and E sites, respectively. Catalyzes the coordinated movement of the two tRNA molecules, the mRNA and conformational changes in the ribosome. The chain is Elongation factor G 1 from Burkholderia mallei (strain ATCC 23344).